Reading from the N-terminus, the 792-residue chain is Zinc finger CCCH domain-containing protein 11A (792 aa).

3 consecutive C3H1-type zinc fingers follow at residues 2-29, 31-57, and 60-87; these read PNQG…HCEA, LGNE…HMEI, and KRSE…HTRS. 3 disordered regions span residues 103-191, 223-331, and 345-443; these read PTVP…VHNG, KKMK…KAGE, and ASQK…RSMQ. At Ser-108 the chain carries Phosphoserine. Glycyl lysine isopeptide (Lys-Gly) (interchain with G-Cter in SUMO2) cross-links involve residues Lys-114 and Lys-124. Polar residues predominate over residues 115 to 135; the sequence is TSQLTVQQSKLSVQSNPSPQL. Ser-132 is subject to Phosphoserine. A Glycyl lysine isopeptide (Lys-Gly) (interchain with G-Cter in SUMO2) cross-link involves residue Lys-140. Phosphoserine is present on residues Ser-149, Ser-171, and Ser-289. A compositionally biased stretch (acidic residues) spans 160–175; sequence ADDDEDDDDQFSEEGD. Basic and acidic residues-rich tracts occupy residues 308–331 and 345–360; these read KKVE…KAGE and ASQK…KAEE. A coiled-coil region spans residues 338-360; sequence EEILLERASQKRGELQTKLKAEE. At Ser-346 the chain carries Phosphoserine. Residues 367-376 show a composition bias toward low complexity; sequence SPSGTKSSSS. Composition is skewed to basic and acidic residues over residues 393–405 and 431–443; these read QQEM…KKDT and QPEE…RSMQ. Residue Lys-454 forms a Glycyl lysine isopeptide (Lys-Gly) (interchain with G-Cter in SUMO2) linkage. Disordered regions lie at residues 458–531 and 545–571; these read ALRV…PTKL and QRLQ…ASSY. The segment covering 461–473 has biased composition (polar residues); the sequence is VQQSSESSGNSRP. Basic and acidic residues-rich tracts occupy residues 492 to 501 and 545 to 558; these read GVKEEKKCGL and QRLQ…KEKA. A Glycyl lysine isopeptide (Lys-Gly) (interchain with G-Cter in SUMO2) cross-link involves residue Lys-601. The tract at residues 690 to 750 is disordered; it reads LSEDKPVTMS…SASTGKPPLS (61 aa). Residues 698 to 715 show a composition bias toward polar residues; it reads MSETENPKDSSVLSSAQA. Residues 717–730 are compositionally biased toward low complexity; sequence SEPLLPEGSGPSSS.

Interacts with TREX complex components THOC2, DDX39 and POLDIP3; the interactions are ATP-dependent. Interacts with PABPN1; this interaction retains ZC3H11A in nuclear speckles. Interacts with KPNA3.

It is found in the nucleus speckle. In terms of biological role, through its association with TREX complex components, may participate in the export and post-transcriptional coordination of selected mRNA transcripts, including those required to maintain the metabolic processes in embryonic cells. Binds RNA. The sequence is that of Zinc finger CCCH domain-containing protein 11A (Zc3h11a) from Mus musculus (Mouse).